Reading from the N-terminus, the 61-residue chain is MARKAMIEKWKKEPKYKTRAYTRCRLCGRPHSVLKKFGICRICFRELAYKGEIPGCRKASW.

Zn(2+) is bound by residues Cys24, Cys27, Cys40, and Cys43.

It belongs to the universal ribosomal protein uS14 family. Zinc-binding uS14 subfamily. Part of the 30S ribosomal subunit. Contacts proteins S3 and S10. Requires Zn(2+) as cofactor.

Its function is as follows. Binds 16S rRNA, required for the assembly of 30S particles and may also be responsible for determining the conformation of the 16S rRNA at the A site. This Clostridium perfringens (strain ATCC 13124 / DSM 756 / JCM 1290 / NCIMB 6125 / NCTC 8237 / Type A) protein is Small ribosomal subunit protein uS14.